Consider the following 457-residue polypeptide: Argininosuccinate lyase (457 aa).

Belongs to the lyase 1 family. Argininosuccinate lyase subfamily.

It is found in the cytoplasm. It catalyses the reaction 2-(N(omega)-L-arginino)succinate = fumarate + L-arginine. Its pathway is amino-acid biosynthesis; L-arginine biosynthesis; L-arginine from L-ornithine and carbamoyl phosphate: step 3/3. This is Argininosuccinate lyase from Escherichia coli O157:H7.